The chain runs to 194 residues: Holliday junction branch migration complex subunit RuvA (194 aa).

Positions methionine 1–lysine 62 are domain I. Residues threonine 63–aspartate 136 form a domain II region. The segment at aspartate 136–proline 140 is flexible linker. The segment at leucine 141–serine 194 is domain III.

Belongs to the RuvA family. In terms of assembly, homotetramer. Forms an RuvA(8)-RuvB(12)-Holliday junction (HJ) complex. HJ DNA is sandwiched between 2 RuvA tetramers; dsDNA enters through RuvA and exits via RuvB. An RuvB hexamer assembles on each DNA strand where it exits the tetramer. Each RuvB hexamer is contacted by two RuvA subunits (via domain III) on 2 adjacent RuvB subunits; this complex drives branch migration. In the full resolvosome a probable DNA-RuvA(4)-RuvB(12)-RuvC(2) complex forms which resolves the HJ.

It is found in the cytoplasm. Its function is as follows. The RuvA-RuvB-RuvC complex processes Holliday junction (HJ) DNA during genetic recombination and DNA repair, while the RuvA-RuvB complex plays an important role in the rescue of blocked DNA replication forks via replication fork reversal (RFR). RuvA specifically binds to HJ cruciform DNA, conferring on it an open structure. The RuvB hexamer acts as an ATP-dependent pump, pulling dsDNA into and through the RuvAB complex. HJ branch migration allows RuvC to scan DNA until it finds its consensus sequence, where it cleaves and resolves the cruciform DNA. The chain is Holliday junction branch migration complex subunit RuvA from Halothermothrix orenii (strain H 168 / OCM 544 / DSM 9562).